We begin with the raw amino-acid sequence, 233 residues long: Ribonuclease 3 (233 aa).

Positions 8–135 (AQRFLEDKQL…VIGAIYLDQG (128 aa)) constitute an RNase III domain. Residue glutamate 48 coordinates Mg(2+). Residue aspartate 52 is part of the active site. Mg(2+) contacts are provided by aspartate 121 and glutamate 124. Residue glutamate 124 is part of the active site. The DRBM domain maps to 161–230 (DYKSKLQELV…AQKVLQDNLV (70 aa)).

It belongs to the ribonuclease III family. In terms of assembly, homodimer. The cofactor is Mg(2+).

The protein localises to the cytoplasm. It carries out the reaction Endonucleolytic cleavage to 5'-phosphomonoester.. Its function is as follows. Digests double-stranded RNA. Involved in the processing of primary rRNA transcript to yield the immediate precursors to the large and small rRNAs (23S and 16S). Processes some mRNAs, and tRNAs when they are encoded in the rRNA operon. Processes pre-crRNA and tracrRNA of type II CRISPR loci if present in the organism. This is Ribonuclease 3 from Syntrophomonas wolfei subsp. wolfei (strain DSM 2245B / Goettingen).